Here is a 941-residue protein sequence, read N- to C-terminus: Glycine dehydrogenase (decarboxylating) (941 aa).

K692 bears the N6-(pyridoxal phosphate)lysine mark.

It belongs to the GcvP family. The glycine cleavage system is composed of four proteins: P, T, L and H. Requires pyridoxal 5'-phosphate as cofactor.

The catalysed reaction is N(6)-[(R)-lipoyl]-L-lysyl-[glycine-cleavage complex H protein] + glycine + H(+) = N(6)-[(R)-S(8)-aminomethyldihydrolipoyl]-L-lysyl-[glycine-cleavage complex H protein] + CO2. In terms of biological role, the glycine cleavage system catalyzes the degradation of glycine. The P protein binds the alpha-amino group of glycine through its pyridoxal phosphate cofactor; CO(2) is released and the remaining methylamine moiety is then transferred to the lipoamide cofactor of the H protein. This is Glycine dehydrogenase (decarboxylating) from Mycolicibacterium paratuberculosis (strain ATCC BAA-968 / K-10) (Mycobacterium paratuberculosis).